The following is a 116-amino-acid chain: MPRIKRGNVAVKRRKKILKRAKGFRGTHSKLFRVANQQVMKALRYAYVGRKRKKREFRSLWITRINAAARLNGTKYSSVIHSLKESKIAINRKMLAQMAVADPDSFVKVLSSAKAS.

Belongs to the bacterial ribosomal protein bL20 family.

The protein resides in the plastid. It is found in the chloroplast. Functionally, binds directly to 23S ribosomal RNA and is necessary for the in vitro assembly process of the 50S ribosomal subunit. It is not involved in the protein synthesizing functions of that subunit. The sequence is that of Large ribosomal subunit protein bL20c from Rhodomonas salina (Cryptomonas salina).